Reading from the N-terminus, the 46-residue chain is uncharacterized protein (46 aa).

A disordered region spans residues 1 to 46 (MEVTPLETGRARSHQKASTAAQPHAADEKMTGSTARRYLSQDHQSV).

This is an uncharacterized protein from Treponema pallidum (strain Nichols).